The primary structure comprises 215 residues: CASP-like protein 1U3 (215 aa).

Over M1 to T13 the chain is Cytoplasmic. The helical transmembrane segment at A14–M34 threads the bilayer. At S35–P68 the chain is on the extracellular side. Residues F69 to L89 traverse the membrane as a helical segment. The Cytoplasmic segment spans residues V90–P105. A helical transmembrane segment spans residues L106–V126. Topologically, residues S127 to Q161 are extracellular. The helical transmembrane segment at V162–V182 threads the bilayer. Topologically, residues R183 to H215 are cytoplasmic. A disordered region spans residues G187–H215. Low complexity predominate over residues D195–G205.

The protein belongs to the Casparian strip membrane proteins (CASP) family. As to quaternary structure, homodimer and heterodimers.

It is found in the cell membrane. This chain is CASP-like protein 1U3, found in Sorghum bicolor (Sorghum).